Here is a 216-residue protein sequence, read N- to C-terminus: Probable GTP-binding protein EngB (216 aa).

Positions 37-214 constitute an EngB-type G domain; the sequence is AGLEVAFAGR…RAAMIKLIAE (178 aa). Residues 45–52, 72–76, 92–95, 159–162, and 193–195 each bind GTP; these read GRSNVGKS, GRTQE, DMPG, TKAD, and TSS. Mg(2+)-binding residues include serine 52 and threonine 74.

Belongs to the TRAFAC class TrmE-Era-EngA-EngB-Septin-like GTPase superfamily. EngB GTPase family. Mg(2+) serves as cofactor.

Its function is as follows. Necessary for normal cell division and for the maintenance of normal septation. The polypeptide is Probable GTP-binding protein EngB (Rhodopseudomonas palustris (strain BisB18)).